Here is a 584-residue protein sequence, read N- to C-terminus: 65 kDa protein (584 aa).

One can recognise a Toprim domain in the interval 459 to 548 (YDLYIAESAI…TKKVENWLPP (90 aa)).

The sequence is that of 65 kDa protein from Zymomonas mobilis subsp. mobilis (strain ATCC 10988 / DSM 424 / LMG 404 / NCIMB 8938 / NRRL B-806 / ZM1).